A 352-amino-acid chain; its full sequence is Dihydrorhizobitoxine desaturase (352 aa).

3 helical membrane-spanning segments follow: residues 53–73 (LATL…IGAY), 89–109 (LAKN…YPLF), and 204–224 (IGIL…LFWI).

Belongs to the fatty acid desaturase type 1 family.

It localises to the cell inner membrane. The catalysed reaction is dihydrorhizobitoxine + 2 reduced [2Fe-2S]-[ferredoxin] + O2 + 2 H(+) = rhizobitoxine + 2 oxidized [2Fe-2S]-[ferredoxin] + 2 H2O. Its function is as follows. Involved in the biosynthesis of the nodulation enhancer compound rhizobitoxine. Catalyzes the final step of the pathway, the introduction of a carbon double bond into the C3 position of dihydrorhizobitoxine to produce rhizobitoxine. In Bradyrhizobium elkanii, this protein is Dihydrorhizobitoxine desaturase.